A 407-amino-acid polypeptide reads, in one-letter code: Imidazolonepropionase (407 aa).

Residues histidine 74 and histidine 76 each coordinate Fe(3+). The Zn(2+) site is built by histidine 74 and histidine 76. 4-imidazolone-5-propanoate-binding residues include arginine 83, tyrosine 146, and histidine 179. Tyrosine 146 is an N-formimidoyl-L-glutamate binding site. Histidine 244 is a binding site for Fe(3+). Histidine 244 is a binding site for Zn(2+). Glutamine 247 provides a ligand contact to 4-imidazolone-5-propanoate. Aspartate 319 contributes to the Fe(3+) binding site. A Zn(2+)-binding site is contributed by aspartate 319. Residues asparagine 321 and glycine 323 each contribute to the N-formimidoyl-L-glutamate site. Threonine 324 provides a ligand contact to 4-imidazolone-5-propanoate.

The protein belongs to the metallo-dependent hydrolases superfamily. HutI family. The cofactor is Zn(2+). It depends on Fe(3+) as a cofactor.

Its subcellular location is the cytoplasm. The catalysed reaction is 4-imidazolone-5-propanoate + H2O = N-formimidoyl-L-glutamate. It participates in amino-acid degradation; L-histidine degradation into L-glutamate; N-formimidoyl-L-glutamate from L-histidine: step 3/3. Functionally, catalyzes the hydrolytic cleavage of the carbon-nitrogen bond in imidazolone-5-propanoate to yield N-formimidoyl-L-glutamate. It is the third step in the universal histidine degradation pathway. The protein is Imidazolonepropionase of Salmonella paratyphi C (strain RKS4594).